Reading from the N-terminus, the 292-residue chain is 4-hydroxy-tetrahydrodipicolinate synthase (292 aa).

Residue threonine 44 participates in pyruvate binding. Catalysis depends on tyrosine 132, which acts as the Proton donor/acceptor. The active-site Schiff-base intermediate with substrate is lysine 161. Isoleucine 203 lines the pyruvate pocket.

It belongs to the DapA family. Homotetramer; dimer of dimers.

The protein resides in the cytoplasm. The enzyme catalyses L-aspartate 4-semialdehyde + pyruvate = (2S,4S)-4-hydroxy-2,3,4,5-tetrahydrodipicolinate + H2O + H(+). The protein operates within amino-acid biosynthesis; L-lysine biosynthesis via DAP pathway; (S)-tetrahydrodipicolinate from L-aspartate: step 3/4. Its function is as follows. Catalyzes the condensation of (S)-aspartate-beta-semialdehyde [(S)-ASA] and pyruvate to 4-hydroxy-tetrahydrodipicolinate (HTPA). This chain is 4-hydroxy-tetrahydrodipicolinate synthase, found in Fervidobacterium nodosum (strain ATCC 35602 / DSM 5306 / Rt17-B1).